Here is a 40-residue protein sequence, read N- to C-terminus: MADTTGRIPLWLIGTVTGIPVIGLVGVFFYGSYSGLGSSL.

A helical membrane pass occupies residues 8–28 (IPLWLIGTVTGIPVIGLVGVF).

It belongs to the PsbJ family. PSII is composed of 1 copy each of membrane proteins PsbA, PsbB, PsbC, PsbD, PsbE, PsbF, PsbH, PsbI, PsbJ, PsbK, PsbL, PsbM, PsbT, PsbX, PsbY, PsbZ, Psb30/Ycf12, at least 3 peripheral proteins of the oxygen-evolving complex and a large number of cofactors. It forms dimeric complexes.

It is found in the plastid. Its subcellular location is the chloroplast thylakoid membrane. In terms of biological role, one of the components of the core complex of photosystem II (PSII). PSII is a light-driven water:plastoquinone oxidoreductase that uses light energy to abstract electrons from H(2)O, generating O(2) and a proton gradient subsequently used for ATP formation. It consists of a core antenna complex that captures photons, and an electron transfer chain that converts photonic excitation into a charge separation. The polypeptide is Photosystem II reaction center protein J (Lolium perenne (Perennial ryegrass)).